The following is a 382-amino-acid chain: C-type lectin domain-containing protein 38 (382 aa).

Residues Met1–Leu40 lie on the Cytoplasmic side of the membrane. Residues Ile41–Phe61 form a helical membrane-spanning segment. The Extracellular portion of the chain corresponds to Phe62–Phe382. Residues Asn97–Ser116 are disordered. Positions Thr100–Ser116 are enriched in low complexity. 2 N-linked (GlcNAc...) asparagine glycosylation sites follow: Asn108 and Asn189. C-type lectin domains lie at Val129–Glu250 and Tyr264–Lys377. Disulfide bonds link Cys150-Cys249, Cys223-Cys241, Cys285-Cys376, and Cys348-Cys368.

In terms of tissue distribution, expressed in ventral cord motor neurons and PLM touch neurons.

Its subcellular location is the membrane. Involved in negative modulation of unc-40-mediated axon outgrowth. Required for proper presynaptic development in axons that have reached their targets. May function in concert with E3 ubiquitin-protein ligase rpm-1 in regulating axon outgrowth. In Caenorhabditis elegans, this protein is C-type lectin domain-containing protein 38.